We begin with the raw amino-acid sequence, 244 residues long: Cobalt transport protein CbiM (244 aa).

The signal sequence occupies residues 1–20 (MRKITFIAALLSLLPRYALA). 6 helical membrane passes run 31 to 51 (KWCL…LIYI), 63 to 83 (ILLG…LPSV), 95 to 115 (LGAI…VLLF), 117 to 137 (ALLL…SMAV), 161 to 181 (VFLG…LQLA), and 201 to 221 (IFAV…VIVL).

Belongs to the CbiM family. Forms an energy-coupling factor (ECF) transporter complex composed of an ATP-binding protein (A component, CbiO), a transmembrane protein (T component, CbiQ) and 2 possible substrate-capture proteins (S components, CbiM and CbiN) of unknown stoichimetry.

It is found in the cell membrane. The protein operates within cofactor biosynthesis; adenosylcobalamin biosynthesis. Its function is as follows. Part of the energy-coupling factor (ECF) transporter complex CbiMNOQ involved in cobalt import. In Thermosediminibacter oceani (strain ATCC BAA-1034 / DSM 16646 / JW/IW-1228P), this protein is Cobalt transport protein CbiM.